A 1192-amino-acid polypeptide reads, in one-letter code: DNA topoisomerase 2 (1192 aa).

Residues N64, N95, and 142–149 each bind ATP; that span reads GTNGVGLK. Mg(2+) is bound by residues E438, D539, and D541. The region spanning 707–1174 is the Topo IIA-type catalytic domain; that stretch reads IPNFLDGMTR…PGASVWLEEI (468 aa). Y800 serves as the catalytic O-(5'-phospho-DNA)-tyrosine intermediate.

This sequence belongs to the type II topoisomerase family. It depends on Mg(2+) as a cofactor. Mn(2+) serves as cofactor. The cofactor is Ca(2+).

The protein resides in the host cytoplasm. It catalyses the reaction ATP-dependent breakage, passage and rejoining of double-stranded DNA.. In terms of biological role, type II topoisomerase. Processively relaxes supercoiled DNA. Displays DNA-supercoiling activity only when associated with the viral histone-like protein. This is DNA topoisomerase 2 (TOP) from African swine fever virus (strain Badajoz 1971 Vero-adapted) (Ba71V).